A 360-amino-acid chain; its full sequence is GTP 3',8-cyclase (360 aa).

Residues Arg-33–Asp-251 form the Radical SAM core domain. GTP is bound at residue Arg-42. The [4Fe-4S] cluster site is built by Cys-49 and Cys-53. S-adenosyl-L-methionine is bound at residue Tyr-55. Cys-56 is a binding site for [4Fe-4S] cluster. Arg-93 is a GTP binding site. Gly-97 lines the S-adenosyl-L-methionine pocket. Thr-124 serves as a coordination point for GTP. An S-adenosyl-L-methionine-binding site is contributed by Ser-148. Lys-185 is a binding site for GTP. S-adenosyl-L-methionine is bound at residue Met-219. [4Fe-4S] cluster is bound by residues Cys-287 and Cys-290. Arg-292–Arg-294 serves as a coordination point for GTP. Cys-304 contributes to the [4Fe-4S] cluster binding site.

This sequence belongs to the radical SAM superfamily. MoaA family. Monomer and homodimer. [4Fe-4S] cluster serves as cofactor.

It catalyses the reaction GTP + AH2 + S-adenosyl-L-methionine = (8S)-3',8-cyclo-7,8-dihydroguanosine 5'-triphosphate + 5'-deoxyadenosine + L-methionine + A + H(+). It participates in cofactor biosynthesis; molybdopterin biosynthesis. Functionally, catalyzes the cyclization of GTP to (8S)-3',8-cyclo-7,8-dihydroguanosine 5'-triphosphate. In Mycobacterium marinum (strain ATCC BAA-535 / M), this protein is GTP 3',8-cyclase.